We begin with the raw amino-acid sequence, 241 residues long: 4-hydroxy-tetrahydrodipicolinate reductase (241 aa).

NAD(+) is bound by residues 7–12 (GVNGHM), 74–76 (GTT), and 98–101 (STNM). Catalysis depends on histidine 131, which acts as the Proton donor/acceptor. Histidine 132 contacts (S)-2,3,4,5-tetrahydrodipicolinate. Lysine 135 acts as the Proton donor in catalysis. 141–142 (GS) contributes to the (S)-2,3,4,5-tetrahydrodipicolinate binding site.

Belongs to the DapB family.

It localises to the cytoplasm. It catalyses the reaction (S)-2,3,4,5-tetrahydrodipicolinate + NAD(+) + H2O = (2S,4S)-4-hydroxy-2,3,4,5-tetrahydrodipicolinate + NADH + H(+). It carries out the reaction (S)-2,3,4,5-tetrahydrodipicolinate + NADP(+) + H2O = (2S,4S)-4-hydroxy-2,3,4,5-tetrahydrodipicolinate + NADPH + H(+). It participates in amino-acid biosynthesis; L-lysine biosynthesis via DAP pathway; (S)-tetrahydrodipicolinate from L-aspartate: step 4/4. In terms of biological role, catalyzes the conversion of 4-hydroxy-tetrahydrodipicolinate (HTPA) to tetrahydrodipicolinate. In Alkaliphilus oremlandii (strain OhILAs) (Clostridium oremlandii (strain OhILAs)), this protein is 4-hydroxy-tetrahydrodipicolinate reductase.